We begin with the raw amino-acid sequence, 405 residues long: Cellobiose 2-epimerase (405 aa).

This sequence belongs to the cellobiose 2-epimerase family.

The enzyme catalyses D-cellobiose = beta-D-glucosyl-(1-&gt;4)-D-mannopyranose. In terms of biological role, catalyzes the reversible epimerization of cellobiose to 4-O-beta-D-glucopyranosyl-D-mannose (Glc-Man). Can also epimerize lactose to epilactose. This is Cellobiose 2-epimerase (ce13) from Eubacterium cellulosolvens.